The primary structure comprises 449 residues: Chitobiosyldiphosphodolichol beta-mannosyltransferase (449 aa).

At 1–7 (MFLEIPR) the chain is on the lumenal side. A helical membrane pass occupies residues 8 to 28 (WLLALIILYLSIPLVVYYVIP). Positions 21–32 (LVVYYVIPYLFY) match the Dolichol recognition motif. Residues 29–104 (YLFYGNKSTK…SNLKRKGGGT (76 aa)) are Cytoplasmic-facing. Residues 105-125 (SVIFMVKKVLFQVLSIFKLLW) constitute an intramembrane region (helical). Over 126-449 (ELRGSDYILV…RTMRDLKLIH (324 aa)) the chain is Cytoplasmic. A required for oligomerization region spans residues 435 to 449 (QSNWERTMRDLKLIH).

Belongs to the glycosyltransferase group 1 family. Glycosyltransferase 33 subfamily. Homodimer. ALG1 forms mannosyltransferases (MT) heteromeric complexes with either ALG2 or ALG11.

The protein localises to the endoplasmic reticulum membrane. It catalyses the reaction an N,N'-diacetylchitobiosyl-diphospho-di-trans,poly-cis-dolichol + GDP-alpha-D-mannose = a beta-D-Man-(1-&gt;4)-beta-D-GlcNAc-(1-&gt;4)-alpha-D-GlcNAc-diphospho-di-trans,poly-cis-dolichol + GDP + H(+). The protein operates within protein modification; protein glycosylation. Functionally, participates in the formation of the lipid-linked precursor oligosaccharide for N-glycosylation. Involved in assembling the dolichol-pyrophosphate-GlcNAc(2)-Man(5) intermediate on the cytoplasmic surface of the ER. This is Chitobiosyldiphosphodolichol beta-mannosyltransferase (ALG1) from Saccharomyces cerevisiae (strain ATCC 204508 / S288c) (Baker's yeast).